Consider the following 242-residue polypeptide: Probable L-ribulose-5-phosphate 4-epimerase UlaF (242 aa).

Substrate is bound by residues 31 to 32 (GN), 48 to 49 (SG), and 78 to 79 (SS). The Zn(2+) site is built by D80, H99, and H101. Residue D124 is the Proton donor/acceptor of the active site. Zn(2+) is bound at residue H175. Y234 serves as the catalytic Proton donor/acceptor.

It belongs to the aldolase class II family. AraD/FucA subfamily. Zn(2+) is required as a cofactor.

The enzyme catalyses L-ribulose 5-phosphate = D-xylulose 5-phosphate. Its pathway is cofactor degradation; L-ascorbate degradation; D-xylulose 5-phosphate from L-ascorbate: step 4/4. Functionally, catalyzes the isomerization of L-ribulose 5-phosphate to D-xylulose 5-phosphate. Is involved in the anaerobic L-ascorbate utilization. This Mycoplasma pneumoniae (strain ATCC 29342 / M129 / Subtype 1) (Mycoplasmoides pneumoniae) protein is Probable L-ribulose-5-phosphate 4-epimerase UlaF.